The sequence spans 330 residues: Protein-lysine N-methyltransferase EEF2KMT (330 aa).

Methionine 1 carries the post-translational modification N-acetylmethionine. S-adenosyl-L-methionine is bound by residues tryptophan 139, 165-167 (GSG), tryptophan 228, and alanine 247.

This sequence belongs to the class I-like SAM-binding methyltransferase superfamily. EEF2KMT family. In terms of assembly, interacts with FAM86B2 and FAM86C1P.

The protein resides in the cytoplasm. The catalysed reaction is L-lysyl-[protein] + 3 S-adenosyl-L-methionine = N(6),N(6),N(6)-trimethyl-L-lysyl-[protein] + 3 S-adenosyl-L-homocysteine + 3 H(+). Its function is as follows. Catalyzes the trimethylation of eukaryotic elongation factor 2 (EEF2) on 'Lys-525'. This Homo sapiens (Human) protein is Protein-lysine N-methyltransferase EEF2KMT.